The sequence spans 406 residues: LIM/homeobox protein Lhx1 (406 aa).

LIM zinc-binding domains lie at 4–54 (CAGC…CKND) and 63–117 (CAGC…CKED). Residues 125-136 (AKENSLHSATTG) show a composition bias toward polar residues. 2 disordered regions span residues 125 to 187 (AKEN…RTTI) and 296 to 372 (FPQG…SAEV). A compositionally biased stretch (low complexity) spans 137–148 (SDPSLSPDSQDP). Residues 151–167 (DDAKDSESANVSDKETG) show a composition bias toward basic and acidic residues. Residues 180–239 (RRGPRTTIKAKQLETLKAAFAATPKPTRHIREQLAQETGLNMRVIQVWFQNRRSKERRMK) constitute a DNA-binding region (homeobox).

The protein resides in the nucleus. Transcriptional factor that defines subclasses of motoneurons that segregate into columns in the spinal cord and select distinct axon pathways. Acts in conjunction with ISL-2. The chain is LIM/homeobox protein Lhx1 (LHX1) from Gallus gallus (Chicken).